We begin with the raw amino-acid sequence, 21 residues long: Fibrinogen beta chain (21 aa).

Q1 is subject to Pyrrolidone carboxylic acid. The span at 1–11 shows a compositional bias: acidic residues; it reads QHSTDYDEVED. A disordered region spans residues 1–21; sequence QHSTDYDEVEDDRAKLHLDAR. O-linked (GalNAc...) threonine glycosylation is present at T4. Y6 carries the post-translational modification Sulfotyrosine. The span at 12–21 shows a compositional bias: basic and acidic residues; the sequence is DRAKLHLDAR.

As to quaternary structure, heterohexamer; disulfide linked. Contains 2 sets of 3 non-identical chains (alpha, beta and gamma). The 2 heterotrimers are in head to head conformation with the N-termini in a small central domain. Post-translationally, conversion of fibrinogen to fibrin is triggered by thrombin, which cleaves fibrinopeptides A and B from alpha and beta chains, and thus exposes the N-terminal polymerization sites responsible for the formation of the soft clot.

The protein localises to the secreted. In terms of biological role, cleaved by the protease thrombin to yield monomers which, together with fibrinogen alpha (FGA) and fibrinogen gamma (FGG), polymerize to form an insoluble fibrin matrix. Fibrin has a major function in hemostasis as one of the primary components of blood clots. In addition, functions during the early stages of wound repair to stabilize the lesion and guide cell migration during re-epithelialization. Was originally thought to be essential for platelet aggregation, based on in vitro studies using anticoagulated blood. However subsequent studies have shown that it is not absolutely required for thrombus formation in vivo. Enhances expression of SELP in activated platelets. Maternal fibrinogen is essential for successful pregnancy. Fibrin deposition is also associated with infection, where it protects against IFNG-mediated hemorrhage. May also facilitate the antibacterial immune response via both innate and T-cell mediated pathways. In Muntiacus muntjak (Barking deer), this protein is Fibrinogen beta chain (FGB).